The following is a 387-amino-acid chain: Arrestin-C (387 aa).

This sequence belongs to the arrestin family. In terms of tissue distribution, retina and pineal gland.

Its function is as follows. May play a role in an as yet undefined retina-specific signal transduction. Could bind to photoactivated-phosphorylated red/green opsins. The chain is Arrestin-C (arr3) from Xenopus laevis (African clawed frog).